We begin with the raw amino-acid sequence, 315 residues long: PIH1 domain-containing protein 2 (315 aa).

The protein belongs to the PIH1 family.

The chain is PIH1 domain-containing protein 2 (Pih1d2) from Mus musculus (Mouse).